Here is a 465-residue protein sequence, read N- to C-terminus: Phosphomethylpyrimidine synthase (465 aa).

Substrate is bound by residues N80, M109, Y139, H175, S195–G197, D236–R239, and E275. Residue H279 participates in Zn(2+) binding. Y302 lines the substrate pocket. H343 provides a ligand contact to Zn(2+). Residues C423, C426, and C431 each coordinate [4Fe-4S] cluster.

It belongs to the ThiC family. [4Fe-4S] cluster serves as cofactor.

It catalyses the reaction 5-amino-1-(5-phospho-beta-D-ribosyl)imidazole + S-adenosyl-L-methionine = 4-amino-2-methyl-5-(phosphooxymethyl)pyrimidine + CO + 5'-deoxyadenosine + formate + L-methionine + 3 H(+). It functions in the pathway cofactor biosynthesis; thiamine diphosphate biosynthesis. Functionally, catalyzes the synthesis of the hydroxymethylpyrimidine phosphate (HMP-P) moiety of thiamine from aminoimidazole ribotide (AIR) in a radical S-adenosyl-L-methionine (SAM)-dependent reaction. The protein is Phosphomethylpyrimidine synthase of Synechococcus sp. (strain CC9311).